We begin with the raw amino-acid sequence, 666 residues long: Mitogen-activated protein kinase kinase kinase ANP1 (666 aa).

A Protein kinase domain is found at 69–331 (WRKGQLIGRG…ASELLKHPFV (263 aa)). ATP is bound by residues 75 to 83 (IGRGAFGTV) and Lys-98. Residues 101–131 (LIAANFASKEKTQAHIQELEEEVKLLKNLSH) adopt a coiled-coil conformation. Glycyl lysine isopeptide (Lys-Gly) (interchain with G-Cter in ubiquitin) cross-links involve residues Lys-109 and Lys-111. The active-site Proton acceptor is the Asp-197. A compositionally biased stretch (basic and acidic residues) spans 452-464 (KFDESPGNGEKES). Disordered stretches follow at residues 452 to 481 (KFDE…DDDE), 536 to 592 (GFLK…DGVS), and 635 to 666 (QEIM…SPGK). The segment covering 538–558 (LKLPPKSRSPSRGPLGGSPSR) has biased composition (low complexity). The span at 560 to 569 (TDATSCSKSP) shows a compositional bias: polar residues. Residues 620–643 (KKWKEELDQELERKRQEIMRQAGL) are a coiled coil. Residues 647–660 (PRDRGMSRQREKSR) show a composition bias toward basic and acidic residues.

The protein belongs to the protein kinase superfamily. STE Ser/Thr protein kinase family. MAP kinase kinase kinase subfamily. Expressed in roots, inflorescence stems, flower buds and flowers. Low amount in rosette and cauline leaves.

It carries out the reaction L-seryl-[protein] + ATP = O-phospho-L-seryl-[protein] + ADP + H(+). It catalyses the reaction L-threonyl-[protein] + ATP = O-phospho-L-threonyl-[protein] + ADP + H(+). Functionally, may be involved in an oxidative stress-mediated signaling cascade that phosphorylates downstream MAP kinases MPK3 and MPK6. May suppress auxin signaling that promotes cell cycle. Functionally redundant to ANP2 and ANP3 in the positive regulation of cytokinesis. The protein is Mitogen-activated protein kinase kinase kinase ANP1 (ANP1) of Arabidopsis thaliana (Mouse-ear cress).